A 312-amino-acid chain; its full sequence is Glyoxylate/hydroxypyruvate reductase A (312 aa).

Residue R227 is part of the active site. Catalysis depends on H275, which acts as the Proton donor.

The protein belongs to the D-isomer specific 2-hydroxyacid dehydrogenase family. GhrA subfamily.

The protein localises to the cytoplasm. The catalysed reaction is glycolate + NADP(+) = glyoxylate + NADPH + H(+). It carries out the reaction (R)-glycerate + NAD(+) = 3-hydroxypyruvate + NADH + H(+). The enzyme catalyses (R)-glycerate + NADP(+) = 3-hydroxypyruvate + NADPH + H(+). In terms of biological role, catalyzes the NADPH-dependent reduction of glyoxylate and hydroxypyruvate into glycolate and glycerate, respectively. This Citrobacter koseri (strain ATCC BAA-895 / CDC 4225-83 / SGSC4696) protein is Glyoxylate/hydroxypyruvate reductase A.